A 557-amino-acid polypeptide reads, in one-letter code: Phosphoribosylaminoimidazole carboxylase, chloroplastic (557 aa).

The 186-residue stretch at 108–293 folds into the ATP-grasp domain; sequence KVALLPAWIP…QFEQHLPAVV (186 aa). 132 to 189 lines the ATP pocket; it reads WDSLDIHFMIKSRRLAYDGRGNFVAKSEEELSSAVDALGGFDRGLYAEKWAPFVKELA. The tract at residues 387-557 is AIR carboxylase catalytic subunit; it reads CSTLLGFIMG…HGWESYLKNS (171 aa).

This sequence in the C-terminal section; belongs to the AIR carboxylase family. Class I subfamily.

Its subcellular location is the plastid. The protein localises to the chloroplast. The enzyme catalyses 5-amino-1-(5-phospho-D-ribosyl)imidazole-4-carboxylate + H(+) = 5-amino-1-(5-phospho-beta-D-ribosyl)imidazole + CO2. It functions in the pathway purine metabolism; IMP biosynthesis via de novo pathway; 5-amino-1-(5-phospho-D-ribosyl)imidazole-4-carboxylate from 5-amino-1-(5-phospho-D-ribosyl)imidazole (carboxylase route): step 1/1. The chain is Phosphoribosylaminoimidazole carboxylase, chloroplastic (PURKE) from Vigna aconitifolia (Moth bean).